The following is a 300-amino-acid chain: Very-long-chain enoyl-CoA reductase (300 aa).

A helical membrane pass occupies residues 91 to 111 (SLVFICEYAGPLFVYPIFYFL). N-linked (GlcNAc...) asparagine glycosylation is present at Asn163. The chain crosses the membrane as a helical span at residues 191 to 211 (VYLGLGLWIIGEVFNYICHIQ). N-linked (GlcNAc...) asparagine glycosylation is present at Asn238. A helical membrane pass occupies residues 243–263 (ILSWIGFSILTQTLTSWIFAL).

The protein belongs to the steroid 5-alpha reductase family.

The protein localises to the endoplasmic reticulum membrane. It catalyses the reaction a very-long-chain 2,3-saturated fatty acyl-CoA + NADP(+) = a very-long-chain (2E)-enoyl-CoA + NADPH + H(+). It functions in the pathway lipid metabolism; fatty acid biosynthesis. Catalyzes the last of the four reactions of the long-chain fatty acids elongation cycle. This endoplasmic reticulum-bound enzymatic process, allows the addition of 2 carbons to the chain of long- and very long-chain fatty acids/VLCFAs per cycle. This enzyme reduces the trans-2,3-enoyl-CoA fatty acid intermediate to an acyl-CoA that can be further elongated by entering a new cycle of elongation. Thereby, it participates in the production of VLCFAs of different chain lengths that are involved in multiple biological processes as precursors of membrane lipids and lipid mediators. This chain is Very-long-chain enoyl-CoA reductase (gpsn2), found in Dictyostelium discoideum (Social amoeba).